Consider the following 153-residue polypeptide: MITTYELIIYGRVQHVGFRDRIEHIGRGLGISGVVYNHKDGTVRILANFDDEEIKELFKKSIKALEKKDKLIKIEKIEEKELNAYIEFPEGISRLSSDDILELNKKLDEGVKYIKLIFSELEEHKKILLDIKDTQIKTIKVLNEIKELLEKKL.

The 99-residue stretch at 4–102 (TYELIIYGRV…SRLSSDDILE (99 aa)) folds into the Acylphosphatase-like domain.

The polypeptide is Acylphosphatase-like protein MJ0553 (Methanocaldococcus jannaschii (strain ATCC 43067 / DSM 2661 / JAL-1 / JCM 10045 / NBRC 100440) (Methanococcus jannaschii)).